The primary structure comprises 469 residues: Serine carboxypeptidase-like 41 (469 aa).

The N-terminal stretch at 1-20 is a signal peptide; the sequence is MAIVSLRDVAMVMVTVQVFA. Cystine bridges form between C83–C342, C243–C260, and C285–C310. N-linked (GlcNAc...) asparagine glycosylation is present at N134. S175 is an active-site residue. An N-linked (GlcNAc...) asparagine glycan is attached at N255. 2 N-linked (GlcNAc...) asparagine glycosylation sites follow: N331 and N347. Residues D379 and H436 contribute to the active site. N-linked (GlcNAc...) asparagine glycosylation is present at N461.

The protein belongs to the peptidase S10 family. In terms of tissue distribution, expressed in flowers.

The protein resides in the secreted. Its function is as follows. Probable carboxypeptidase. The chain is Serine carboxypeptidase-like 41 (SCPL41) from Arabidopsis thaliana (Mouse-ear cress).